We begin with the raw amino-acid sequence, 123 residues long: MPRGSVLLLASLLLAAALSATLGLGSPVKEKRGWTLNSAGYLLGPHALDSHRSFQDKHGLAGKRELEPEDEARPGSFDRPLAENNVVRTIIEFLTFLHLKDAGALERLPSLPTAESAEDAERS.

The N-terminal stretch at 1–19 (MPRGSVLLLASLLLAAALS) is a signal peptide. Positions 20–30 (ATLGLGSPVKE) are excised as a propeptide. A compositionally biased stretch (basic and acidic residues) spans 53 to 66 (SFQDKHGLAGKREL). Residues 53 to 79 (SFQDKHGLAGKRELEPEDEARPGSFDR) are disordered. At Ala61 the chain carries Alanine amide. Ser116 is subject to Phosphoserine.

It belongs to the galanin family.

It localises to the secreted. Its function is as follows. Endocrine hormone of the central and peripheral nervous systems that binds and activates the G protein-coupled receptors GALR1, GALR2, and GALR3. This small neuropeptide may regulate diverse physiologic functions including contraction of smooth muscle of the gastrointestinal and genitourinary tract, growth hormone and insulin release and adrenal secretion. In Bos taurus (Bovine), this protein is Galanin peptides (GAL).